A 550-amino-acid chain; its full sequence is MAELPTAPNGVSSGDYLHRSIDQLRSLTHLTTADLRTAQLVHDYKPFNINEFRQNVVERLDYSLKNGLVHHQQQQQQQQQQEMLQQQQQHQAHQEQQQQQQQQQQQHHHQQQQHHLKSSYSAPSSPPTPHEQQEQKYDPNRSPQRPLMSSGSNASSPEDDRRGSGGGPGGGGGGDGDQSKPYKCASCSKSFANSSYLSQHTRIHLGIKPYRCEICQRKFTQLSHLQQHIRTHTGDKPYKCRHAGCPKAFSQLSNLQSHSRCHQTDKPFKCNSCYKCFADEMTLLEHIPKHKDSKHLKTHICNLCGKSYTQETYLQKHLQKHAEKAEKQQQRHSSQVAAVQQHVPSGGIGLNLQRQAMNDVNAAYWAKMGADSAAASLAEAIQQQLPQTNGQTYANFATLQQHQQQQQQQQQDMLQQHHQRLADTPGHSHSPHEDPAGEDLVLRQTTPQHHLQQQQQQQQPSPGPGSSAFTPLSATVPPSHLQQHRGAPAATAAYLYQQNAAAAAAAFPTQLISLHQIRNYAHQPGAAGLIAGDHLTLGLSAVQAAKEKAQ.

Residues 73 to 105 (QQQQQQQQQEMLQQQQQHQAHQEQQQQQQQQQQ) are compositionally biased toward low complexity. Positions 73-179 (QQQQQQQQQE…GGGGGDGDQS (107 aa)) are disordered. Residues 106 to 117 (QHHHQQQQHHLK) are compositionally biased toward basic residues. A compositionally biased stretch (polar residues) spans 141–156 (RSPQRPLMSSGSNASS). The segment covering 164–176 (SGGGPGGGGGGDG) has biased composition (gly residues). 5 C2H2-type zinc fingers span residues 182–204 (YKCA…TRIH), 210–232 (YRCE…IRTH), 238–262 (YKCR…SRCH), 268–290 (FKCN…IPKH), and 299–321 (HICN…LQKH). Residues 399–485 (LQQHQQQQQQ…VPPSHLQQHR (87 aa)) are disordered. The segment covering 400 to 416 (QQHQQQQQQQQQDMLQQ) has biased composition (low complexity). The residue at position 424 (Thr-424) is a Phosphothreonine. Phosphoserine occurs at positions 428 and 430. Positions 444 to 460 (QTTPQHHLQQQQQQQQP) are enriched in low complexity. 2 positions are modified to phosphotyrosine: Tyr-494 and Tyr-496.

The protein belongs to the krueppel C2H2-type zinc-finger protein family. As to quaternary structure, interacts with nab; which acts as a coactivator. Interacts with ap.

It is found in the nucleus. Transcription factor involved in neuronal fate specification. First required in embryonic CNS development to define the number of cells that express apterous (ap) in the ap thoracic cluster of interneurons. Later on, it plays a central role in the combinatorial code of transcription factors that specifies the fate of the Tv neuron in the ap cluster by participating in the transcription regulation of FMRFa in Tv cells. Also required for projection neuron dendritic targeting. The sequence is that of Zinc finger protein squeeze (sqz) from Drosophila pseudoobscura pseudoobscura (Fruit fly).